The chain runs to 750 residues: Photosystem I P700 chlorophyll a apoprotein A1 (750 aa).

A run of 8 helical transmembrane segments spans residues 70–93 (VFSAHFGQLSIIFLWLSGMYFHGA), 156–179 (LYCTAIGALVFAALMLFAGWFHYH), 195–219 (LNHHLAGLLGLGSLSWAGHQVHVSL), 291–309 (IAHHHLAIAILFLIAGHMY), 346–369 (WHAQLSLNLAMLGSSTIVVAHHMY), 385–411 (LSLFTHHMWIGGFLIVGAAAHAAIFMV), 433–455 (AIISHLNWACIFLGFHSFGLYIH), and 531–549 (FLVHHIHAFTIHVTVLILL). Residues cysteine 573 and cysteine 582 each coordinate [4Fe-4S] cluster. Transmembrane regions (helical) follow at residues 589 to 610 (HVFLGLFWMYNAISVVIFHFSW) and 664 to 686 (LSAYGLFFLGAHFVWAFSLMFLF). Residue histidine 675 participates in chlorophyll a' binding. Positions 683 and 691 each coordinate chlorophyll a. Residue tryptophan 692 coordinates phylloquinone. A helical membrane pass occupies residues 724 to 744 (AVGVTHYLLGGIATTWAFFLA).

Belongs to the PsaA/PsaB family. As to quaternary structure, the PsaA/B heterodimer binds the P700 chlorophyll special pair and subsequent electron acceptors. PSI consists of a core antenna complex that captures photons, and an electron transfer chain that converts photonic excitation into a charge separation. The eukaryotic PSI reaction center is composed of at least 11 subunits. P700 is a chlorophyll a/chlorophyll a' dimer, A0 is one or more chlorophyll a, A1 is one or both phylloquinones and FX is a shared 4Fe-4S iron-sulfur center. serves as cofactor.

The protein localises to the plastid. It localises to the chloroplast thylakoid membrane. The enzyme catalyses reduced [plastocyanin] + hnu + oxidized [2Fe-2S]-[ferredoxin] = oxidized [plastocyanin] + reduced [2Fe-2S]-[ferredoxin]. Its function is as follows. PsaA and PsaB bind P700, the primary electron donor of photosystem I (PSI), as well as the electron acceptors A0, A1 and FX. PSI is a plastocyanin-ferredoxin oxidoreductase, converting photonic excitation into a charge separation, which transfers an electron from the donor P700 chlorophyll pair to the spectroscopically characterized acceptors A0, A1, FX, FA and FB in turn. Oxidized P700 is reduced on the lumenal side of the thylakoid membrane by plastocyanin. The polypeptide is Photosystem I P700 chlorophyll a apoprotein A1 (Liriodendron tulipifera (Tuliptree)).